Reading from the N-terminus, the 238-residue chain is Large ribosomal subunit protein uL5c (238 aa).

The protein belongs to the universal ribosomal protein uL5 family. As to quaternary structure, part of the 50S ribosomal subunit; contacts the 5S rRNA.

Its subcellular location is the plastid. It is found in the chloroplast. Functionally, binds 5S rRNA, forms part of the central protuberance of the 50S subunit. This Trieres chinensis (Marine centric diatom) protein is Large ribosomal subunit protein uL5c (rpl5).